A 252-amino-acid chain; its full sequence is Imidazole glycerol phosphate synthase subunit HisF (252 aa).

Active-site residues include Asp-11 and Asp-130.

This sequence belongs to the HisA/HisF family. As to quaternary structure, heterodimer of HisH and HisF.

The protein resides in the cytoplasm. The enzyme catalyses 5-[(5-phospho-1-deoxy-D-ribulos-1-ylimino)methylamino]-1-(5-phospho-beta-D-ribosyl)imidazole-4-carboxamide + L-glutamine = D-erythro-1-(imidazol-4-yl)glycerol 3-phosphate + 5-amino-1-(5-phospho-beta-D-ribosyl)imidazole-4-carboxamide + L-glutamate + H(+). Its pathway is amino-acid biosynthesis; L-histidine biosynthesis; L-histidine from 5-phospho-alpha-D-ribose 1-diphosphate: step 5/9. IGPS catalyzes the conversion of PRFAR and glutamine to IGP, AICAR and glutamate. The HisF subunit catalyzes the cyclization activity that produces IGP and AICAR from PRFAR using the ammonia provided by the HisH subunit. The protein is Imidazole glycerol phosphate synthase subunit HisF of Thermococcus kodakarensis (strain ATCC BAA-918 / JCM 12380 / KOD1) (Pyrococcus kodakaraensis (strain KOD1)).